A 71-amino-acid chain; its full sequence is Putative defensin-like protein 303 (71 aa).

An N-terminal signal peptide occupies residues 1-25 (MKSNKATFFLGLLLVYAFCIMLIES). Disulfide bonds link cysteine 27–cysteine 45, cysteine 33–cysteine 50, and cysteine 39–cysteine 52.

Belongs to the DEFL family.

The protein localises to the secreted. The polypeptide is Putative defensin-like protein 303 (Arabidopsis thaliana (Mouse-ear cress)).